We begin with the raw amino-acid sequence, 398 residues long: Candidapepsin-2 (398 aa).

A signal peptide spans Met1–Ala18. A propeptide spans Thr19–Arg56 (activation peptide). The 315-residue stretch at Tyr70–Ala384 folds into the Peptidase A1 domain. Residue Asp88 is part of the active site. Pepstatin A is bound at residue Asp88–Gly90. An intrachain disulfide couples Cys103 to Cys115. Pepstatin A contacts are provided by residues Gly141–Asp142 and Asp274–Thr278. Residue Asp274 is part of the active site. Residues Cys312 and Cys350 are joined by a disulfide bond. Asn313 and Asn321 each carry an N-linked (GlcNAc...) asparagine glycan.

Belongs to the peptidase A1 family. In terms of assembly, monomer. O-glycosylated.

The protein localises to the secreted. The enzyme catalyses Preferential cleavage at the carboxyl of hydrophobic amino acids, but fails to cleave 15-Leu-|-Tyr-16, 16-Tyr-|-Leu-17 and 24-Phe-|-Phe-25 of insulin B chain. Activates trypsinogen, and degrades keratin.. This is Candidapepsin-2 (SAP2) from Candida albicans (strain WO-1) (Yeast).